Reading from the N-terminus, the 592-residue chain is V-type ATP synthase alpha chain (592 aa).

233-240 provides a ligand contact to ATP; sequence GPFGSGKT.

The protein belongs to the ATPase alpha/beta chains family.

The catalysed reaction is ATP + H2O + 4 H(+)(in) = ADP + phosphate + 5 H(+)(out). In terms of biological role, produces ATP from ADP in the presence of a proton gradient across the membrane. The V-type alpha chain is a catalytic subunit. The chain is V-type ATP synthase alpha chain from Clostridium botulinum (strain Loch Maree / Type A3).